The following is a 236-amino-acid chain: Thylakoid lumenal 17.4 kDa protein, chloroplastic (236 aa).

2 consecutive Pentapeptide repeat domains span residues 124–163 (TNLK…SFKG) and 169–208 (AVID…VFED).

As to quaternary structure, interacts in vitro with LTO1.

Its subcellular location is the plastid. It is found in the chloroplast thylakoid lumen. This is Thylakoid lumenal 17.4 kDa protein, chloroplastic from Arabidopsis thaliana (Mouse-ear cress).